Here is a 466-residue protein sequence, read N- to C-terminus: Aladin (466 aa).

WD repeat units lie at residues 135–174, 179–218, 229–269, 271–310, and 378–418; these read WLNSDVRYLAWNQHFFCLAVAGVDDVVRIYTKSSSATTAT, PSQTQITCMAWRPLCASEIVIGCRQGLCFWEVDSTLHLGR, PNNL…MQPL, RLGPPGSLLKWSPDNDWLFAATVDRVFRVWNCHQQWTTER, and LVGG…FDLQ.

Its subcellular location is the nucleus. It is found in the nuclear pore complex. It localises to the cytoplasm. The protein localises to the cytoskeleton. The protein resides in the spindle. Involved in mitotic spindle assembly. The chain is Aladin from Drosophila melanogaster (Fruit fly).